We begin with the raw amino-acid sequence, 289 residues long: Agamous-like MADS-box protein AGL93 (289 aa).

The MADS-box domain occupies 18–78 (QTCFKKSSLS…GKLIKTWPDD (61 aa)). Positions 151–197 (EFGQTRAVSSTTNPLSPPPSLIEDHRHQQRTEPLMSGVSNTEQDLST) are disordered. Residues 187–197 (GVSNTEQDLST) are compositionally biased toward polar residues.

As to expression, expressed in pollen.

The protein localises to the nucleus. Functionally, probable transcription factor. In Arabidopsis thaliana (Mouse-ear cress), this protein is Agamous-like MADS-box protein AGL93.